Reading from the N-terminus, the 342-residue chain is Uroporphyrinogen decarboxylase (342 aa).

Residues 24 to 28 (RQAGR), Asp74, Tyr149, Ser204, and His319 contribute to the substrate site.

It belongs to the uroporphyrinogen decarboxylase family. In terms of assembly, homodimer.

Its subcellular location is the cytoplasm. It catalyses the reaction uroporphyrinogen III + 4 H(+) = coproporphyrinogen III + 4 CO2. It functions in the pathway porphyrin-containing compound metabolism; protoporphyrin-IX biosynthesis; coproporphyrinogen-III from 5-aminolevulinate: step 4/4. Its function is as follows. Catalyzes the decarboxylation of four acetate groups of uroporphyrinogen-III to yield coproporphyrinogen-III. The polypeptide is Uroporphyrinogen decarboxylase (Chelativorans sp. (strain BNC1)).